The chain runs to 271 residues: Putative phosphoenolpyruvate synthase regulatory protein (271 aa).

152–159 (GVSRCGKT) serves as a coordination point for ADP.

The protein belongs to the pyruvate, phosphate/water dikinase regulatory protein family. PSRP subfamily.

It catalyses the reaction [pyruvate, water dikinase] + ADP = [pyruvate, water dikinase]-phosphate + AMP + H(+). It carries out the reaction [pyruvate, water dikinase]-phosphate + phosphate + H(+) = [pyruvate, water dikinase] + diphosphate. Bifunctional serine/threonine kinase and phosphorylase involved in the regulation of the phosphoenolpyruvate synthase (PEPS) by catalyzing its phosphorylation/dephosphorylation. This chain is Putative phosphoenolpyruvate synthase regulatory protein, found in Legionella pneumophila (strain Corby).